We begin with the raw amino-acid sequence, 257 residues long: Zinc transporter ZupT (257 aa).

The next 5 helical transmembrane spans lie at 5–25 (LILTLLAGAATFIGAFLAVLG), 32–52 (VLAFSLGFAAGIMLLISLMEM), 61–81 (GMSPVLGYGMFIIGLLGYFGL), 109–129 (AILLTLGISLHNFPEGIATFV), and 137–157 (LGMGIALAVALHNIPEGLAVA). Fe(2+) is bound by residues Asn120 and Glu123. The Zn(2+) site is built by Glu123 and His148. Fe(2+) contacts are provided by Asn149, Glu152, and Glu181. Glu152 serves as a coordination point for Zn(2+). 3 helical membrane passes run 182 to 202 (ILGGVLAWLILGSLISPVVMA), 203 to 223 (AVMAAVAGIMVALSVDELMPL), and 236 to 256 (GVLCGMSVMGLSLVVLQTAGI).

Belongs to the ZIP transporter (TC 2.A.5) family. ZupT subfamily.

It is found in the cell inner membrane. The enzyme catalyses Zn(2+)(in) = Zn(2+)(out). Mediates zinc uptake. May also transport other divalent cations. In Escherichia fergusonii (strain ATCC 35469 / DSM 13698 / CCUG 18766 / IAM 14443 / JCM 21226 / LMG 7866 / NBRC 102419 / NCTC 12128 / CDC 0568-73), this protein is Zinc transporter ZupT.